The sequence spans 63 residues: Large ribosomal subunit protein bL28 (63 aa).

Positions 1-21 (MSRRDDLTGKGPMFGNNRSHA) are disordered.

The protein belongs to the bacterial ribosomal protein bL28 family.

This chain is Large ribosomal subunit protein bL28, found in Mycoplasmopsis pulmonis (strain UAB CTIP) (Mycoplasma pulmonis).